The primary structure comprises 578 residues: Isocitrate dehydrogenase kinase/phosphatase (578 aa).

ATP-binding positions include 315–321 (APGIRGM) and Lys336. Asp371 is an active-site residue.

Belongs to the AceK family.

The protein resides in the cytoplasm. The catalysed reaction is L-seryl-[isocitrate dehydrogenase] + ATP = O-phospho-L-seryl-[isocitrate dehydrogenase] + ADP + H(+). Bifunctional enzyme which can phosphorylate or dephosphorylate isocitrate dehydrogenase (IDH) on a specific serine residue. This is a regulatory mechanism which enables bacteria to bypass the Krebs cycle via the glyoxylate shunt in response to the source of carbon. When bacteria are grown on glucose, IDH is fully active and unphosphorylated, but when grown on acetate or ethanol, the activity of IDH declines drastically concomitant with its phosphorylation. This Escherichia coli (strain K12 / MC4100 / BW2952) protein is Isocitrate dehydrogenase kinase/phosphatase.